We begin with the raw amino-acid sequence, 638 residues long: Chaperone protein DnaK (638 aa).

Thr-198 is subject to Phosphothreonine; by autocatalysis. The tract at residues 600-638 is disordered; that stretch reads KTQTEGGAQPGAEADGDTGAKGGEKVVDADFEEVKDDKK. Positions 628–638 are enriched in acidic residues; sequence ADFEEVKDDKK.

It belongs to the heat shock protein 70 family.

In terms of biological role, acts as a chaperone. This Geobacter metallireducens (strain ATCC 53774 / DSM 7210 / GS-15) protein is Chaperone protein DnaK.